We begin with the raw amino-acid sequence, 367 residues long: Glutamate 5-kinase (367 aa).

Residue K10 participates in ATP binding. Substrate is bound by residues S50, D137, and N149. ATP-binding positions include 169 to 170 (TD) and 211 to 217 (TGGMGTK). The region spanning 275 to 353 (AGEITVDDGA…QEISEILGYE (79 aa)) is the PUA domain.

It belongs to the glutamate 5-kinase family.

The protein localises to the cytoplasm. It carries out the reaction L-glutamate + ATP = L-glutamyl 5-phosphate + ADP. Its pathway is amino-acid biosynthesis; L-proline biosynthesis; L-glutamate 5-semialdehyde from L-glutamate: step 1/2. With respect to regulation, proline-mediated feedback inhibition. Its function is as follows. Catalyzes the transfer of a phosphate group to glutamate to form L-glutamate 5-phosphate. In Serratia marcescens, this protein is Glutamate 5-kinase.